The following is a 417-amino-acid chain: Phosphoglycerate kinase 2 (417 aa).

S2 is subject to N-acetylserine. Phosphoserine is present on residues S2 and S4. An N6-acetyllysine modification is found at K11. The (2R)-3-phosphoglycerate site is built by V23, D24, F25, N26, Q38, and R39. K48 carries the N6-acetyllysine modification. Positions 62, 63, 65, and 66 each coordinate (2R)-3-phosphoglycerate. An N6-acetyllysine mark is found at K75, K86, and K97. Residues L122 and R123 each contribute to the (2R)-3-phosphoglycerate site. N6-acetyllysine is present on residues K131 and K146. (2R)-3-phosphoglycerate contacts are provided by H170 and R171. Phosphotyrosine is present on Y196. K199 is subject to N6-acetyllysine. G214 contributes to the ADP binding site. G214 is a CDP binding site. Positions 215 and 216 each coordinate AMP. A215 is a binding site for ATP. A215 contacts Mg(2+). Positions 218 and 219 each coordinate Mg(2+). D219 serves as a coordination point for CDP. Residue K220 coordinates AMP. An ATP-binding site is contributed by K220. Position 238 (G238) interacts with ADP. CDP is bound at residue G238. G239 contacts AMP. ATP is bound at residue G239. N6-acetyllysine occurs at positions 267 and 291. G313 is a binding site for AMP. G313 provides a ligand contact to ATP. CDP contacts are provided by G338 and F343. F343 contacts ADP. E344 provides a ligand contact to AMP. Residues E344, D375, and T376 each coordinate ATP. D375 is a binding site for Mg(2+).

This sequence belongs to the phosphoglycerate kinase family. Monomer. Mg(2+) is required as a cofactor.

The protein localises to the cytoplasm. The catalysed reaction is (2R)-3-phosphoglycerate + ATP = (2R)-3-phospho-glyceroyl phosphate + ADP. It participates in carbohydrate degradation; glycolysis; pyruvate from D-glyceraldehyde 3-phosphate: step 2/5. Its function is as follows. Essential for sperm motility and male fertility but is not required for the completion of spermatogenesis. The chain is Phosphoglycerate kinase 2 (PGK2) from Macaca fascicularis (Crab-eating macaque).